Reading from the N-terminus, the 683-residue chain is MANDPRKLLVTCALPYANGSIHLGHMLEHIQADIWVRYQRLRGNTVNFICADDAHGTPIMLKAQQMGMTPEAMIEMVSEEHQRDFAGFDISFDNYHSTHSDENRELASHIYLQLKKNGFISSRTISQLFDPEKEMFLPDRFVKGTCPKCKSEDQYGDNCDACGETYSPTELINPKSAVSGATPVMKDSEHFFFDLPQFESMLKEWTRSGSLQSETANKMQEWFEGGLQQWDISRDAPYFGFEIPGEKDKFFYVWLDAPIGYMGSFKNLCDKRGDLDFNEYWNKDSKTELYHFIGKDIVYFHSLFWPAMLDGSGFRKPTNVFVHGYVTVNGAKMSKSKGTFVKASTYLNHLDPECLRYYYAAKLNNRIDDLDLNLEDFTQRVNADVVNKIVNLASRNAGFITKRFDGKLSAHFAEPELYAEFAGAADRIAELFEAREFGRAIREITALADKANQYVDEKAPWVVAKQEGQDQALQDICTVGINLFRVLMTYLKPVMPALAERTEAFLNQELTWEGVATPLTDHAVTPFKALFNRIDPKQVEAMIEASKAEAAAEKAAADAAKPKSAETELSKDPLAAEIEFDDFAKVDLRIAKILSCEAVEKSDKLLKFELDIGGETRQVFSGIKSAYQPEDLIGKYTVVVANLKPRKMKFGMSEGMILAAGPGGSDLWLLEPHQGAQAGMRVM.

The 'HIGH' region motif lies at 15 to 25 (PYANGSIHLGH). The Zn(2+) site is built by Cys-146, Cys-149, Cys-159, and Cys-162. Residues 332-336 (KMSKS) carry the 'KMSKS' region motif. Residue Lys-335 participates in ATP binding. Positions 582–683 (DFAKVDLRIA…QGAQAGMRVM (102 aa)) constitute a tRNA-binding domain.

It belongs to the class-I aminoacyl-tRNA synthetase family. MetG type 1 subfamily. As to quaternary structure, homodimer. The cofactor is Zn(2+).

Its subcellular location is the cytoplasm. It carries out the reaction tRNA(Met) + L-methionine + ATP = L-methionyl-tRNA(Met) + AMP + diphosphate. Its function is as follows. Is required not only for elongation of protein synthesis but also for the initiation of all mRNA translation through initiator tRNA(fMet) aminoacylation. The chain is Methionine--tRNA ligase from Vibrio cholerae serotype O1 (strain ATCC 39315 / El Tor Inaba N16961).